The sequence spans 730 residues: Arginine decarboxylase 1B, chloroplastic (730 aa).

The N-terminal 37 residues, 1-37 (MPALGCCVDAAVSPPPGYSFLWDSSLPAPEIFPSGVP), are a transit peptide targeting the chloroplast. Position 157 is an N6-(pyridoxal phosphate)lysine (K157). Residues S309, G346, and 395–398 (ESGR) contribute to the pyridoxal 5'-phosphate site. 460–461 (YA) contacts substrate. The active-site Proton donor; shared with dimeric partner is C548. D549 provides a ligand contact to substrate. Y590 contributes to the pyridoxal 5'-phosphate binding site.

Belongs to the Orn/Lys/Arg decarboxylase class-II family. SpeA subfamily. Mg(2+) is required as a cofactor. The cofactor is pyridoxal 5'-phosphate.

It is found in the plastid. Its subcellular location is the chloroplast. It carries out the reaction L-arginine + H(+) = agmatine + CO2. Its pathway is alkaloid biosynthesis; nicotine biosynthesis. The protein operates within amine and polyamine biosynthesis; agmatine biosynthesis; agmatine from L-arginine: step 1/1. Its function is as follows. Involved in the biosynthesis of pyridine alkaloid natural products, leading mainly to the production of anabasine, anatabine, nicotine and nornicotine, effective deterrents against herbivores with antiparasitic and pesticide properties (neurotoxins); nornicotine serves as the precursor in the synthesis of the carcinogen compound N'-nitrosonornicotine (NNN). Required for the biosynthesis of putrescine. Catalyzes the first step of polyamine (PA) biosynthesis to produce putrescine from arginine. The protein is Arginine decarboxylase 1B, chloroplastic of Nicotiana tabacum (Common tobacco).